The primary structure comprises 243 residues: tRNA pseudouridine synthase A (243 aa).

Asp53 serves as the catalytic Nucleophile. A substrate-binding site is contributed by Tyr111.

The protein belongs to the tRNA pseudouridine synthase TruA family. As to quaternary structure, homodimer.

The enzyme catalyses uridine(38/39/40) in tRNA = pseudouridine(38/39/40) in tRNA. Functionally, formation of pseudouridine at positions 38, 39 and 40 in the anticodon stem and loop of transfer RNAs. The chain is tRNA pseudouridine synthase A from Chlorobium limicola (strain DSM 245 / NBRC 103803 / 6330).